The chain runs to 424 residues: MGSLVLTLCALFCLAAYLVSGSPIMNLEQSPLEEDMSLFGDVFSEQDGVDFNTLLQSMKDEFLKTLNLSDIPTQDSAKVDPPEYMLELYNKFATDRTSMPSANIIRSFKNEDLFSQPVSFNGLRKYPLLFNVSIPHHEEVIMAELRLYTLVQRDRMIYDGVDRKITIFEVLESKGDNEGERNMLVLVSGEIYGTNSEWETFDVTDAIRRWQKSGSSTHQLEVHIESKHDEAEDASSGRLEIDTSAQNKHNPLLIVFSDDQSSDKERKEELNEMISHEQLPELDNLGLDSFSSGPGEEALLQMRSNIIYDSTARIRRNAKGNYCKRTPLYIDFKEIGWDSWIIAPPGYEAYECRGVCNYPLAEHLTPTKHAIIQALVHLKNSQKASKACCVPTKLEPISILYLDKGVVTYKFKYEGMAVSECGCR.

Positions 1–21 (MGSLVLTLCALFCLAAYLVSG) are cleaved as a signal peptide. A propeptide spanning residues 22 to 316 (SPIMNLEQSP…IYDSTARIRR (295 aa)) is cleaved from the precursor. N-linked (GlcNAc...) asparagine glycans are attached at residues asparagine 67 and asparagine 131. 3 disulfides stabilise this stretch: cysteine 323/cysteine 389, cysteine 352/cysteine 421, and cysteine 356/cysteine 423.

This sequence belongs to the TGF-beta family. As to quaternary structure, homodimer; disulfide-linked. Interacts with FBN1 (via N-terminal domain) and FBN2. Interacts with ENG. Detected in mammary epithelia (at protein level).

The protein localises to the secreted. Functionally, required for maintaining the proliferative activity of embryonic cardiomyocytes by preventing premature activation of the negative cell cycle regulator CDKN1C/p57KIP and maintaining the required expression levels of cardiogenic factors such as MEF2C and NKX2-5. Acts as a ligand for ACVRL1/ALK1, BMPR1A/ALK3 and BMPR1B/ALK6, leading to activation of SMAD1, SMAD5 and SMAD8 transcription factors. Inhibits endothelial cell migration and growth. May reduce cell migration and cell matrix adhesion in breast cancer cell lines. The sequence is that of Bone morphogenetic protein 10 (BMP10) from Homo sapiens (Human).